Here is an 85-residue protein sequence, read N- to C-terminus: UPF0291 protein str0508 (85 aa).

The interval T62–S85 is disordered.

Belongs to the UPF0291 family.

It localises to the cytoplasm. This chain is UPF0291 protein str0508, found in Streptococcus thermophilus (strain CNRZ 1066).